We begin with the raw amino-acid sequence, 304 residues long: MRLPIILDTDPGIDDAAAIAAALFAPELDLQLMTTVAGNVSVEKTTRNALQLLHFWNADVPLAQGASMPLVRPLRDAASVHGESGMEGYDFVEHQRQPLAKPAFQAIRDALMHAAEPITLVAIGPLTNIALLLTQYPECVFNIRRLVIMGGSAGRGNFTPNAEFNIAIDPEAAAKVFHSGLEIVMCGLDVTNRALLAADYLATLPTLNQTGKMLHALFSHYRSGSMSSGLRMHDLCAIAWLARPELFTLQPCFVAVETQGTWTAGTTVVDIEGRLGQPANAQVALDIDVEGFQRWAAEVIALAP.

His233 is a catalytic residue.

It belongs to the IUNH family. RihC subfamily.

Functionally, hydrolyzes both purine and pyrimidine ribonucleosides with a broad-substrate specificity. This chain is Non-specific ribonucleoside hydrolase RihC, found in Klebsiella pneumoniae subsp. pneumoniae (strain ATCC 700721 / MGH 78578).